A 219-amino-acid chain; its full sequence is 2-C-methyl-D-erythritol 4-phosphate cytidylyltransferase (219 aa).

Belongs to the IspD/TarI cytidylyltransferase family. IspD subfamily.

It carries out the reaction 2-C-methyl-D-erythritol 4-phosphate + CTP + H(+) = 4-CDP-2-C-methyl-D-erythritol + diphosphate. It participates in isoprenoid biosynthesis; isopentenyl diphosphate biosynthesis via DXP pathway; isopentenyl diphosphate from 1-deoxy-D-xylulose 5-phosphate: step 2/6. Its function is as follows. Catalyzes the formation of 4-diphosphocytidyl-2-C-methyl-D-erythritol from CTP and 2-C-methyl-D-erythritol 4-phosphate (MEP). In Chlamydia trachomatis serovar L2 (strain ATCC VR-902B / DSM 19102 / 434/Bu), this protein is 2-C-methyl-D-erythritol 4-phosphate cytidylyltransferase.